The chain runs to 395 residues: Vacuolar protease A (395 aa).

Residues 1–18 (MKGSLLLAGATLLGCTSA) form the signal peptide. Residues 19-72 (KLHSLKLKKVSLKEQLEHADIDVQIKSLGQKYMGIRPGQHEQQMFKEQTPIEAE) constitute a propeptide, activation peptide. In terms of domain architecture, Peptidase A1 spans 87–392 (YFSEISIGTP…DLGKGTVGLA (306 aa)). D105 is an active-site residue. A disulfide bridge connects residues C118 and C123. Residue N140 is glycosylated (N-linked (GlcNAc...) asparagine). D289 is a catalytic residue. C318 and C351 are disulfide-bonded. An N-linked (GlcNAc...) asparagine glycan is attached at N335.

This sequence belongs to the peptidase A1 family.

It localises to the vacuole lumen. The protein localises to the secreted. It carries out the reaction Hydrolysis of proteins with broad specificity for peptide bonds. Cleaves -Leu-Leu-|-Val-Tyr- bond in a synthetic substrate. Does not act on esters of Tyr or Arg.. Functionally, vacuolar aspartic endopeptidase which is probably also secreted and contributes to virulence. In Arthroderma otae (strain ATCC MYA-4605 / CBS 113480) (Microsporum canis), this protein is Vacuolar protease A (PEP2).